A 145-amino-acid polypeptide reads, in one-letter code: MRLSSFIVVGAAVVNLLTSGSVVVAAFPRVSDVSAMAIAPHRMDQGATNGGKRLLRYHSNNNRGGDEDIAEERGIFDFKNLEMLTNLARLNKANNLDSRLDDFFQALIKAKVNPTNIHHTRLDQDDYLELRQLFRTWYTFYHRAS.

The first 21 residues, 1 to 21 (MRLSSFIVVGAAVVNLLTSGS), serve as a signal peptide directing secretion. Residues 53–73 (RLLRYHSNNNRGGDEDIAEER) carry the RxLR-dEER motif.

The protein belongs to the RxLR effector family.

It is found in the secreted. The protein localises to the host cell. In terms of biological role, secreted effector that impairs both plant effector-triggered immunity and pathogen-associated molecular patterns (PAMP)-triggered immunity (PTI). Suppresses plant cell death as a part of the plant defense responses. Facilitates plant infection by altering the auxin content at the roots penetration points of the of the pathogen. The protein is Secreted RxLR effector protein PSE1 of Phytophthora nicotianae (Potato buckeye rot agent).